The following is a 215-amino-acid chain: Thymidylate kinase (215 aa).

11 to 18 (GIDGAGKS) contributes to the ATP binding site.

This sequence belongs to the thymidylate kinase family.

It carries out the reaction dTMP + ATP = dTDP + ADP. In terms of biological role, phosphorylation of dTMP to form dTDP in both de novo and salvage pathways of dTTP synthesis. This Nitrosomonas eutropha (strain DSM 101675 / C91 / Nm57) protein is Thymidylate kinase.